The sequence spans 211 residues: tRNA (guanine-N(7)-)-methyltransferase (211 aa).

S-adenosyl-L-methionine-binding residues include glutamate 43, aspartate 68, and asparagine 117. Residues lysine 121, aspartate 153, and 190–193 (TEYE) each bind substrate.

Belongs to the class I-like SAM-binding methyltransferase superfamily. TrmB family.

The enzyme catalyses guanosine(46) in tRNA + S-adenosyl-L-methionine = N(7)-methylguanosine(46) in tRNA + S-adenosyl-L-homocysteine. It participates in tRNA modification; N(7)-methylguanine-tRNA biosynthesis. Its function is as follows. Catalyzes the formation of N(7)-methylguanine at position 46 (m7G46) in tRNA. The chain is tRNA (guanine-N(7)-)-methyltransferase from Clostridium acetobutylicum (strain ATCC 824 / DSM 792 / JCM 1419 / IAM 19013 / LMG 5710 / NBRC 13948 / NRRL B-527 / VKM B-1787 / 2291 / W).